The primary structure comprises 244 residues: MRNILLTIEYDGTNYFGWQKQPNKKTVQGVIEDAIKKITGEDVNLVGSGRTDRGVHALGQKANFKTESKIPTEKFPLALNSVLPNDISIKDAAEVSLDFSARYSAKQKTYKYLIYNHKFRPAILCNYVYHFPYELDLVSMQKSCEYFIGEYDFSSFCSSGSETNSKVRRIFDCYLTFENDCIAIYITANGFLYNMARIIAGTILDVGVGRFKPTDIPLIIESKDRTKAGKTLPPWGLYLVDVVY.

The active-site Nucleophile is Asp-52. Tyr-110 lines the substrate pocket.

The protein belongs to the tRNA pseudouridine synthase TruA family. In terms of assembly, homodimer.

It catalyses the reaction uridine(38/39/40) in tRNA = pseudouridine(38/39/40) in tRNA. Formation of pseudouridine at positions 38, 39 and 40 in the anticodon stem and loop of transfer RNAs. The protein is tRNA pseudouridine synthase A of Caldicellulosiruptor saccharolyticus (strain ATCC 43494 / DSM 8903 / Tp8T 6331).